A 173-amino-acid polypeptide reads, in one-letter code: uncharacterized protein (173 aa).

One can recognise an N-acetyltransferase domain in the interval 4–173 (VKIVQVSEKD…TDFLLKKALV (170 aa)). Acetyl-CoA contacts are provided by residues 97-99 (IYL), 106-110 (RGLGK), and 136-138 (NEN).

This is an uncharacterized protein from Lactobacillus delbrueckii subsp. lactis.